Reading from the N-terminus, the 1438-residue chain is Lysophospholipase NTE1 (1438 aa).

Residues 1–25 lie on the Cytoplasmic side of the membrane; that stretch reads MDSDTSSADFHSTETLVSTPKYSYG. Residues 26–46 form a helical membrane-spanning segment; the sequence is VLINVILLVSWTCFRVVNWFL. At 47-64 the chain is on the lumenal side; that stretch reads VTLPSILLGMLSKTFQIT. The chain crosses the membrane as a helical span at residues 65-85; that stretch reads LSLSSILMFVVAVTAICFLVV. Over 86–1438 the chain is Cytoplasmic; sequence RYKYLTRYSR…HVSLSRRNSI (1353 aa). Over residues 432–450 the composition is skewed to polar residues; that stretch reads YETQTIPNESEDSPTIQRS. The segment at 432–464 is disordered; it reads YETQTIPNESEDSPTIQRSSLRRRASHSTSLRK. A nucleoside 3',5'-cyclic phosphate is bound by residues 590–720 and 707–856; these read GDDS…LTID and RLKR…VANR. Residues 1131–1295 form the PNPLA domain; that stretch reads LVLGGGGSRG…LDNLPVSEMK (165 aa). The short motif at 1135–1140 is the GXGXXG element; that stretch reads GGGSRG. Residues 1162–1166 carry the GXSXG motif; it reads GTSIG. The active-site Nucleophile is Ser-1164. Asp-1282 functions as the Proton acceptor in the catalytic mechanism. The DGA/G signature appears at 1282–1284; the sequence is DGG.

The protein belongs to the NTE family.

It is found in the endoplasmic reticulum membrane. The enzyme catalyses a 1-acyl-sn-glycero-3-phosphocholine + H2O = sn-glycerol 3-phosphocholine + a fatty acid + H(+). Its activity is regulated as follows. Inhibited by organophosphorus esters. In terms of biological role, intracellular phospholipase B that catalyzes the double deacylation of phosphatidylcholine (PC) to glycerophosphocholine (GroPCho). Plays an important role in membrane lipid homeostasis. Responsible for the rapid PC turnover in response to inositol, elevated temperatures, or when choline is present in the growth medium. This is Lysophospholipase NTE1 (NTE1) from Meyerozyma guilliermondii (strain ATCC 6260 / CBS 566 / DSM 6381 / JCM 1539 / NBRC 10279 / NRRL Y-324) (Yeast).